The primary structure comprises 90 residues: Auxin-responsive protein SAUR22 (90 aa).

It belongs to the ARG7 family.

It localises to the cell membrane. Functionally, functions as a positive effector of cell expansion through modulation of auxin transport. This chain is Auxin-responsive protein SAUR22, found in Arabidopsis thaliana (Mouse-ear cress).